Reading from the N-terminus, the 226-residue chain is Leucyl/phenylalanyl-tRNA--protein transferase (226 aa).

It belongs to the L/F-transferase family.

The protein resides in the cytoplasm. The catalysed reaction is N-terminal L-lysyl-[protein] + L-leucyl-tRNA(Leu) = N-terminal L-leucyl-L-lysyl-[protein] + tRNA(Leu) + H(+). It catalyses the reaction N-terminal L-arginyl-[protein] + L-leucyl-tRNA(Leu) = N-terminal L-leucyl-L-arginyl-[protein] + tRNA(Leu) + H(+). The enzyme catalyses L-phenylalanyl-tRNA(Phe) + an N-terminal L-alpha-aminoacyl-[protein] = an N-terminal L-phenylalanyl-L-alpha-aminoacyl-[protein] + tRNA(Phe). Its function is as follows. Functions in the N-end rule pathway of protein degradation where it conjugates Leu, Phe and, less efficiently, Met from aminoacyl-tRNAs to the N-termini of proteins containing an N-terminal arginine or lysine. This Pseudomonas putida (strain ATCC 47054 / DSM 6125 / CFBP 8728 / NCIMB 11950 / KT2440) protein is Leucyl/phenylalanyl-tRNA--protein transferase.